The chain runs to 295 residues: UDP-N-acetylenolpyruvoylglucosamine reductase (295 aa).

The 166-residue stretch at 23–188 (QVGGPADFLA…ISAKFALKPG (166 aa)) folds into the FAD-binding PCMH-type domain. Arg167 is an active-site residue. Ser217 acts as the Proton donor in catalysis. Glu287 is an active-site residue.

Belongs to the MurB family. It depends on FAD as a cofactor.

It is found in the cytoplasm. The catalysed reaction is UDP-N-acetyl-alpha-D-muramate + NADP(+) = UDP-N-acetyl-3-O-(1-carboxyvinyl)-alpha-D-glucosamine + NADPH + H(+). Its pathway is cell wall biogenesis; peptidoglycan biosynthesis. Cell wall formation. This chain is UDP-N-acetylenolpyruvoylglucosamine reductase, found in Streptococcus equi subsp. equi (strain 4047).